A 163-amino-acid chain; its full sequence is Nucleotide-binding protein YajQ (163 aa).

The protein belongs to the YajQ family.

Functionally, nucleotide-binding protein. The chain is Nucleotide-binding protein YajQ from Shigella flexneri.